The sequence spans 91 residues: Tachykinin-like peptide (91 aa).

The signal sequence occupies residues 1 to 19 (MKILVAFAVIMLVSAQVLA). Positions 20–51 (AEIGLNDEPEWYSDQIQEDLPVFENFLQRIAR) are excised as a propeptide. Methionine 62 carries the post-translational modification Methionine amide. The disordered stretch occupies residues 64–91 (KRNNGFGQMSRKRSAERNTIHNYERRRK). The propeptide occupies 66–91 (NNGFGQMSRKRSAERNTIHNYERRRK). The span at 76-91 (RSAERNTIHNYERRRK) shows a compositional bias: basic and acidic residues.

As to expression, expressed by the skin glands.

It localises to the secreted. Functionally, tachykinins are active peptides which excite neurons, evoke behavioral responses, are potent vasodilators and secretagogues, and contract (directly or indirectly) many smooth muscles. In vitro, induces contraction of guinea pig ileum smooth muscle in a dose-dependent manner. This chain is Tachykinin-like peptide, found in Theloderma corticale (Kwangsi warty tree frog).